We begin with the raw amino-acid sequence, 971 residues long: Protein ALWAYS EARLY 1 (971 aa).

Over residues 1-11 (MAPTRKSKSVN) the composition is skewed to basic residues. Disordered stretches follow at residues 1 to 40 (MAPT…LADK), 117 to 137 (SESE…LKRK), 197 to 260 (IEDF…MFEN), 326 to 371 (GLLE…GLED), and 421 to 507 (PKES…KISL). The 59-residue stretch at 40 to 98 (KLGPQWTKRELVRFYDAYRKYVGDWKKVAAAVRNNRSVEMVETLFCMNRAYLSLPEGTA) folds into the SANT domain. Composition is skewed to basic and acidic residues over residues 209-219 (KQLDADDDASR), 332-350 (SSPH…KKSN), and 424-440 (STQD…EVDS). Residues 450-470 (SSQGPAKQLKTAKTTVESSSA) show a composition bias toward polar residues.

Expressed ubiquitously in vegetative and reproductive tissues.

The protein resides in the nucleus. This is Protein ALWAYS EARLY 1 (ALY1) from Arabidopsis thaliana (Mouse-ear cress).